We begin with the raw amino-acid sequence, 362 residues long: Protein RecA (362 aa).

ATP is bound at residue glycine 65–threonine 72. A disordered region spans residues arginine 323 to glutamate 362. The span at leucine 331–glutamate 362 shows a compositional bias: basic and acidic residues.

The protein belongs to the RecA family.

It localises to the cytoplasm. Functionally, can catalyze the hydrolysis of ATP in the presence of single-stranded DNA, the ATP-dependent uptake of single-stranded DNA by duplex DNA, and the ATP-dependent hybridization of homologous single-stranded DNAs. It interacts with LexA causing its activation and leading to its autocatalytic cleavage. The chain is Protein RecA from Limosilactobacillus reuteri (strain DSM 20016) (Lactobacillus reuteri).